Reading from the N-terminus, the 246-residue chain is Triosephosphate isomerase (246 aa).

Residue 9–11 (NWK) participates in substrate binding. The active-site Electrophile is the histidine 99. The active-site Proton acceptor is glutamate 168. Substrate contacts are provided by residues glycine 174, serine 207, and 228 to 229 (GG).

This sequence belongs to the triosephosphate isomerase family. In terms of assembly, homodimer.

Its subcellular location is the cytoplasm. It carries out the reaction D-glyceraldehyde 3-phosphate = dihydroxyacetone phosphate. It functions in the pathway carbohydrate biosynthesis; gluconeogenesis. Its pathway is carbohydrate degradation; glycolysis; D-glyceraldehyde 3-phosphate from glycerone phosphate: step 1/1. In terms of biological role, involved in the gluconeogenesis. Catalyzes stereospecifically the conversion of dihydroxyacetone phosphate (DHAP) to D-glyceraldehyde-3-phosphate (G3P). The chain is Triosephosphate isomerase from Prochlorococcus marinus (strain NATL2A).